Reading from the N-terminus, the 313-residue chain is Methionyl-tRNA formyltransferase (313 aa).

Residue 113-116 (SLLP) participates in (6S)-5,6,7,8-tetrahydrofolate binding.

It belongs to the Fmt family.

It catalyses the reaction L-methionyl-tRNA(fMet) + (6R)-10-formyltetrahydrofolate = N-formyl-L-methionyl-tRNA(fMet) + (6S)-5,6,7,8-tetrahydrofolate + H(+). Attaches a formyl group to the free amino group of methionyl-tRNA(fMet). The formyl group appears to play a dual role in the initiator identity of N-formylmethionyl-tRNA by promoting its recognition by IF2 and preventing the misappropriation of this tRNA by the elongation apparatus. This is Methionyl-tRNA formyltransferase from Francisella tularensis subsp. novicida (strain U112).